We begin with the raw amino-acid sequence, 166 residues long: Regulatory protein RecX (166 aa).

This sequence belongs to the RecX family.

The protein localises to the cytoplasm. Its function is as follows. Modulates RecA activity. The protein is Regulatory protein RecX of Klebsiella pneumoniae subsp. pneumoniae (strain ATCC 700721 / MGH 78578).